The primary structure comprises 307 residues: Myeloid-associated differentiation marker-like protein 2 (307 aa).

MARVEL domains lie at 17 to 154 (AVTS…ARPG) and 159 to 303 (YMAT…RIRF). 7 helical membrane passes run 53–73 (FCMA…ACEF), 90–110 (AFAM…PLYF), 129–149 (LAAS…VALT), 163–183 (VSGL…GALV), 198–218 (VAVY…SVMG), 232–252 (IVYT…WPVF), and 278–298 (LVVA…LAYS).

This sequence belongs to the MAL family.

It localises to the membrane. The sequence is that of Myeloid-associated differentiation marker-like protein 2 (Myadml2) from Mus musculus (Mouse).